The following is a 658-amino-acid chain: Katanin p80 WD40 repeat-containing subunit B1 (658 aa).

The tract at residues 1–284 (MATPVVTKTA…VADLAICNDQ (284 aa)) is interaction with dynein. Residues 1 to 300 (MATPVVTKTA…SQSNVSSYVV (300 aa)) form an interaction with centrosomes region. WD repeat units lie at residues 18–58 (AHAS…CIMS), 61–100 (GHTS…ILRT), 103–142 (GHKA…CVFR), 145–184 (GHSQ…MMSE), 187–226 (GHTG…VVSC), and 229–269 (GEPG…DVVL). The tract at residues 285-437 (LIGVAFSQSN…LPQLPVPNLE (153 aa)) is interaction with PAFAH1B1. Residues 311-329 (VTQDPVQANQPLTQQTPNP) show a composition bias toward polar residues. 2 disordered regions span residues 311 to 419 (VTQD…EVSK) and 434 to 458 (PNLE…PDII). Residues 352 to 374 (HNSESERRSPSSEDDRDERESRA) show a composition bias toward basic and acidic residues. Thr-395 bears the Phosphothreonine mark. The tract at residues 436-658 (LEVPARPSVM…ELHLLMASLD (223 aa)) is interaction with KATNA1 and NDEL1.

This sequence belongs to the WD repeat KATNB1 family. In terms of assembly, interacts with KATNA1. This interaction enhances the microtubule binding and severing activity of KATNA1 and also targets this activity to the centrosome. This interaction is weakly competed by KATNBL1 which has a lower affinity for it. Interacts with ASPM; the katanin complex formation KATNA1:KATNB1 is required for the association of ASPM. Interacts with dynein, microtubules, NDEL1 and PAFAH1B1. Interacts with KATNAL1; this interaction is weakly competed by KATNBL1 which has a lower affinity for it. Interacts with CAMSAP2 and CAMSAP3; leading to regulate the length of CAMSAP-decorated microtubule stretches.

The protein resides in the cytoplasm. Its subcellular location is the cytoskeleton. It localises to the microtubule organizing center. The protein localises to the centrosome. It is found in the spindle pole. The protein resides in the spindle. Functionally, participates in a complex which severs microtubules in an ATP-dependent manner. May act to target the enzymatic subunit of this complex to sites of action such as the centrosome. Microtubule severing may promote rapid reorganization of cellular microtubule arrays and the release of microtubules from the centrosome following nucleation. Microtubule release from the mitotic spindle poles may allow depolymerization of the microtubule end proximal to the spindle pole, leading to poleward microtubule flux and poleward motion of chromosome. The function in regulating microtubule dynamics at spindle poles seems to depend on the association of the katanin KATNA1:KATNB1 complex with ASPM which recruits it to microtubules. Reversely KATNA1:KATNB1 can enhance ASPM blocking activity on microtubule minus-end growth. Microtubule release within the cell body of neurons may be required for their transport into neuronal processes by microtubule-dependent motor proteins. This transport is required for axonal growth. The sequence is that of Katanin p80 WD40 repeat-containing subunit B1 (Katnb1) from Mus musculus (Mouse).